Here is a 377-residue protein sequence, read N- to C-terminus: Phospho-N-acetylmuramoyl-pentapeptide-transferase (377 aa).

The next 10 membrane-spanning stretches (helical) occupy residues 27–47, 71–91, 94–114, 139–159, 182–202, 216–236, 252–272, 280–300, 305–325, and 354–374; these read TAFA…YVIE, GTPT…TLLW, LSDP…AIGF, ILAS…GSYS, VPHL…IVIV, GLAI…TYVS, MVGE…GFLW, IFMG…VAVV, LLLP…ILQV, and KVIV…LTTL.

This sequence belongs to the glycosyltransferase 4 family. MraY subfamily. Mg(2+) serves as cofactor.

The protein resides in the cell inner membrane. The catalysed reaction is UDP-N-acetyl-alpha-D-muramoyl-L-alanyl-gamma-D-glutamyl-meso-2,6-diaminopimeloyl-D-alanyl-D-alanine + di-trans,octa-cis-undecaprenyl phosphate = di-trans,octa-cis-undecaprenyl diphospho-N-acetyl-alpha-D-muramoyl-L-alanyl-D-glutamyl-meso-2,6-diaminopimeloyl-D-alanyl-D-alanine + UMP. It participates in cell wall biogenesis; peptidoglycan biosynthesis. Functionally, catalyzes the initial step of the lipid cycle reactions in the biosynthesis of the cell wall peptidoglycan: transfers peptidoglycan precursor phospho-MurNAc-pentapeptide from UDP-MurNAc-pentapeptide onto the lipid carrier undecaprenyl phosphate, yielding undecaprenyl-pyrophosphoryl-MurNAc-pentapeptide, known as lipid I. In Acidobacterium capsulatum (strain ATCC 51196 / DSM 11244 / BCRC 80197 / JCM 7670 / NBRC 15755 / NCIMB 13165 / 161), this protein is Phospho-N-acetylmuramoyl-pentapeptide-transferase.